The primary structure comprises 509 residues: MTGEKIRSLHRDQKPSKDEDLLEPDEEATAGGTFTRTGKLKNSKMFSNHKVIRSPSNPALLQNHHQQISPITPGESKTDAYFPVHECVFKGDIRRLSSLIRSHSIGQKDNHGNTPLHLAVMLGNKECAHLLLAHNAPVKVKNAQGWSPLAEAISYGDRQMITALLRKLKQQSRESVEEKRPRLLKALKELGDFYLELHWDFQSWVPLLSRILPSDACKIYKQGINIRLDTTLIDFTDMKCQRGDLSFIFNGDAAPSESFVVLDNEQKVYQRIHHEESEMETEEEVDILMSSDIYSATLSTKSISFTRAQTGWLFREDKTERVGNFLADFHLVNGLILESRKRREHLTEEDILRNKAIMESLSKGGNLMEQNFEPVRRQSLTPPPPNTITWEEYISAENGKAPHLGRELVCKENKKTFKATIAMSQDFPLGIESLLNVLEVIAPFKHFNKLREFVQMKLPPGFPVKLDIPVFPTITATVTFQEFRYGEFEDAIFTIPDDYKEDPSRFPDL.

Residues 1–19 show a composition bias toward basic and acidic residues; it reads MTGEKIRSLHRDQKPSKDE. A disordered region spans residues 1–42; that stretch reads MTGEKIRSLHRDQKPSKDEDLLEPDEEATAGGTFTRTGKLKN. ANK repeat units lie at residues 79-110, 111-140, and 144-173; these read DAYFPVHECVFKGDIRRLSSLIRSHSIGQKDN, HGNTPLHLAVMLGNKECAHLLLAHNAPVKV, and QGWSPLAEAISYGDRQMITALLRKLKQQSR.

The protein localises to the endoplasmic reticulum membrane. In terms of biological role, acts as a molecular chaperone for G protein-coupled receptors, regulating their biogenesis and exit from the ER. This chain is Ankyrin repeat domain-containing protein 13C (ankrd13c), found in Xenopus tropicalis (Western clawed frog).